We begin with the raw amino-acid sequence, 150 residues long: UPF0178 protein Ssed_1350 (150 aa).

Belongs to the UPF0178 family.

This chain is UPF0178 protein Ssed_1350, found in Shewanella sediminis (strain HAW-EB3).